We begin with the raw amino-acid sequence, 759 residues long: Phosphoribosylformylglycinamidine synthase subunit PurL (759 aa).

His48 is an active-site residue. 2 residues coordinate ATP: Tyr51 and Lys91. Glu93 lines the Mg(2+) pocket. Substrate-binding positions include 94–97 and Arg116; that span reads SHNH. Residue His95 is the Proton acceptor of the active site. A Mg(2+)-binding site is contributed by Asp117. A substrate-binding site is contributed by Gln240. Asp268 is a Mg(2+) binding site. 317–319 serves as a coordination point for substrate; sequence ESQ. The ATP site is built by Asn501 and Gly538. A Mg(2+)-binding site is contributed by Asn539. Residue Ser541 participates in substrate binding.

It belongs to the FGAMS family. In terms of assembly, monomer. Part of the FGAM synthase complex composed of 1 PurL, 1 PurQ and 2 PurS subunits.

The protein localises to the cytoplasm. The catalysed reaction is N(2)-formyl-N(1)-(5-phospho-beta-D-ribosyl)glycinamide + L-glutamine + ATP + H2O = 2-formamido-N(1)-(5-O-phospho-beta-D-ribosyl)acetamidine + L-glutamate + ADP + phosphate + H(+). It functions in the pathway purine metabolism; IMP biosynthesis via de novo pathway; 5-amino-1-(5-phospho-D-ribosyl)imidazole from N(2)-formyl-N(1)-(5-phospho-D-ribosyl)glycinamide: step 1/2. Part of the phosphoribosylformylglycinamidine synthase complex involved in the purines biosynthetic pathway. Catalyzes the ATP-dependent conversion of formylglycinamide ribonucleotide (FGAR) and glutamine to yield formylglycinamidine ribonucleotide (FGAM) and glutamate. The FGAM synthase complex is composed of three subunits. PurQ produces an ammonia molecule by converting glutamine to glutamate. PurL transfers the ammonia molecule to FGAR to form FGAM in an ATP-dependent manner. PurS interacts with PurQ and PurL and is thought to assist in the transfer of the ammonia molecule from PurQ to PurL. The polypeptide is Phosphoribosylformylglycinamidine synthase subunit PurL (Chlorobaculum tepidum (strain ATCC 49652 / DSM 12025 / NBRC 103806 / TLS) (Chlorobium tepidum)).